Here is a 423-residue protein sequence, read N- to C-terminus: Aspartic protease-like protein pytH (423 aa).

A signal peptide spans 1–16 (MWLSVALLTLLDGALA). In terms of domain architecture, Peptidase A1 spans 38-416 (TTDAIQIGTP…DFDKLRVGLA (379 aa)). Residue Asp56 is part of the active site. Asn88, Asn97, Asn168, Asn196, Asn231, and Asn279 each carry an N-linked (GlcNAc...) asparagine glycan. The active site involves Asp291. An N-linked (GlcNAc...) asparagine glycan is attached at Asn330. A disulfide bridge connects residues Cys338 and Cys377.

This sequence belongs to the peptidase A1 family.

It functions in the pathway secondary metabolite biosynthesis. Aspartic protease-like protein; part of the gene cluster that mediates the biosynthesis of pyranterreones, a family of antioxidative compounds. The first step of pyranonigrins biosynthesis is performed by the hybrid PKS-NRPS synthetase pytA that condenses 4 malonyl-CoA units ato the acetyl starter unit by the modular PKS of pytA. The acyl chain is then connected to an L-serine through the amide bond by the modular NRPS of pytA. A tetramic acid is formed and released from the PKS-NRPS pytA to give pyranterreone 5 with the help of the thioesterase pytI. Pyranterreone 5 could be methylated by pytC to afford pyranterreone 6. Both pyranterreones 5 and 6 are subsequently oxidized by the FAD-linked oxidoreductase pytB and the cytochrome P450 monooxygenase pytD to form the fused gamma-pyrone core, resulting in pyranterreones 7 and 11, respectively. The hydroxy group at C-8 of pyranterreones 7 and 11 are dehydrated by the aspartyl protease pytH to form a delta-7 double bond to give pyranterreones 3 and 1, 2 accordingly. The exo-methylene of pyranterreone 3 could be reduced into a pendant methyl by reductase pytE to provide pyranterreone 4, also known as cordylactam. Pyranterreone 4 can be reconverted to pyranterreone 3 through pytB-catalyzed dehydrogenation or further oxidized to pyranterreones 9 and 10. The sequence is that of Aspartic protease-like protein pytH from Aspergillus terreus (strain NIH 2624 / FGSC A1156).